We begin with the raw amino-acid sequence, 171 residues long: Superoxide dismutase [Cu-Zn] 2 (171 aa).

The N-terminal stretch at 1-20 is a signal peptide; that stretch reads MKKLSGVLAGSLLLISASFS. 3 residues coordinate Cu cation: H67, H69, and H85. The cysteines at positions 74 and 167 are disulfide-linked. H85, H93, H102, and D105 together coordinate Zn(2+). H147 is a Cu cation binding site.

The protein belongs to the Cu-Zn superoxide dismutase family. Cu cation is required as a cofactor. The cofactor is Zn(2+).

It catalyses the reaction 2 superoxide + 2 H(+) = H2O2 + O2. Functionally, destroys radicals which are normally produced within the cells and which are toxic to biological systems. This Aquifex aeolicus (strain VF5) protein is Superoxide dismutase [Cu-Zn] 2 (sodC2).